Consider the following 478-residue polypeptide: Aspartyl/glutamyl-tRNA(Asn/Gln) amidotransferase subunit B (478 aa).

This sequence belongs to the GatB/GatE family. GatB subfamily. In terms of assembly, heterotrimer of A, B and C subunits.

It catalyses the reaction L-glutamyl-tRNA(Gln) + L-glutamine + ATP + H2O = L-glutaminyl-tRNA(Gln) + L-glutamate + ADP + phosphate + H(+). The enzyme catalyses L-aspartyl-tRNA(Asn) + L-glutamine + ATP + H2O = L-asparaginyl-tRNA(Asn) + L-glutamate + ADP + phosphate + 2 H(+). Allows the formation of correctly charged Asn-tRNA(Asn) or Gln-tRNA(Gln) through the transamidation of misacylated Asp-tRNA(Asn) or Glu-tRNA(Gln) in organisms which lack either or both of asparaginyl-tRNA or glutaminyl-tRNA synthetases. The reaction takes place in the presence of glutamine and ATP through an activated phospho-Asp-tRNA(Asn) or phospho-Glu-tRNA(Gln). The polypeptide is Aspartyl/glutamyl-tRNA(Asn/Gln) amidotransferase subunit B (Lachnoclostridium phytofermentans (strain ATCC 700394 / DSM 18823 / ISDg) (Clostridium phytofermentans)).